A 468-amino-acid polypeptide reads, in one-letter code: COBRA-like protein 5 (468 aa).

The first 22 residues, 1-22 (MELHRCSLLALLLAVTCSVAVA), serve as a signal peptide directing secretion. N-linked (GlcNAc...) asparagine glycans are attached at residues asparagine 31, asparagine 156, asparagine 164, and asparagine 228. The segment at 251-278 (GGGKNARAGDGRSRRNSGGGGGHSGGTE) is disordered. 3 N-linked (GlcNAc...) asparagine glycosylation sites follow: asparagine 340, asparagine 355, and asparagine 374. Residue asparagine 443 is the site of GPI-anchor amidated asparagine attachment. A propeptide spans 444-468 (SAPIGPPRSVAAAASAILVVLLLVA) (removed in mature form).

Belongs to the COBRA family. As to expression, expressed mainly in developing sclerenchyma cells and in vascular bundles.

Its subcellular location is the cell membrane. Functionally, involved in determining the orientation of cell expansion, probably by playing an important role in cellulose deposition. May act by recruiting cellulose synthesizing complexes to discrete positions on the cell surface. In Oryza sativa subsp. indica (Rice), this protein is COBRA-like protein 5 (BC1).